The sequence spans 77 residues: MNPIVEFCVNNLASGADAAFAKLDADDSLDVIEYDCLTYCDLCATSLFALVDGEVVRGETADELVANIYTFLEENPF.

The protein belongs to the UPF0349 family.

The protein is UPF0349 protein lwe2340 of Listeria welshimeri serovar 6b (strain ATCC 35897 / DSM 20650 / CCUG 15529 / CIP 8149 / NCTC 11857 / SLCC 5334 / V8).